Here is a 311-residue protein sequence, read N- to C-terminus: Methionyl-tRNA formyltransferase (311 aa).

110-113 (SLLP) serves as a coordination point for (6S)-5,6,7,8-tetrahydrofolate.

This sequence belongs to the Fmt family.

The enzyme catalyses L-methionyl-tRNA(fMet) + (6R)-10-formyltetrahydrofolate = N-formyl-L-methionyl-tRNA(fMet) + (6S)-5,6,7,8-tetrahydrofolate + H(+). Functionally, attaches a formyl group to the free amino group of methionyl-tRNA(fMet). The formyl group appears to play a dual role in the initiator identity of N-formylmethionyl-tRNA by promoting its recognition by IF2 and preventing the misappropriation of this tRNA by the elongation apparatus. This Streptococcus equi subsp. zooepidemicus (strain H70) protein is Methionyl-tRNA formyltransferase.